The primary structure comprises 482 residues: MRWLWPLGVSLAVALAAGPERAPRGVWLQQGGHQPVAQEQPDRSRRGAEREDAKGLQQYVPEGWAEYPRPIRPAALQPTQPWVAASPSPDRARATGGSGQEPQGNVTGPPGQRPQVQNPLYPVTERSYGAYAVLLLALLLFAVGIVGSLAVMCIVWHSYYLKSAWNSVLASLALWDFLVLFFCLPVVTFHEITKQRLLGAVSCRAVPFVEVSSLGVTTFSLCALGIDRFHVATSTLPKARPIEPCPSILAKLAVIWVGSMTLAAPELLLWQLVREPSPAAGTVDTCIMKPSAHLPESLYSLVLTYQNARMWWSFGCYFCLPVLFTVTCQLVTWRVRGTPGRKPESRPGPQEPRGARPSSTVAGLAAVHALCALPENVCNVVAAYLSAALTRQTLELLGLVTQFSTFFKAALTPLLLLCVSRPLGRAFLDCCCCCCGEGCGEGCGGRAAPAGPRAKLHTELSASGYFHKPREAPPLLALGTPC.

The first 25 residues, 1-25 (MRWLWPLGVSLAVALAAGPERAPRG), serve as a signal peptide directing secretion. Disordered stretches follow at residues 25–56 (GVWLQQGGHQPVAQEQPDRSRRGAEREDAKGL) and 78–119 (PTQP…VQNP). The Extracellular segment spans residues 26–134 (VWLQQGGHQP…ERSYGAYAVL (109 aa)). Over residues 40-54 (QPDRSRRGAEREDAK) the composition is skewed to basic and acidic residues. N-linked (GlcNAc...) asparagine glycosylation occurs at N105. The chain crosses the membrane as a helical span at residues 135–155 (LLALLLFAVGIVGSLAVMCIV). Topologically, residues 156-167 (WHSYYLKSAWNS) are cytoplasmic. The chain crosses the membrane as a helical span at residues 168-188 (VLASLALWDFLVLFFCLPVVT). The Extracellular segment spans residues 189–205 (FHEITKQRLLGAVSCRA). C203 and C286 are oxidised to a cystine. The helical transmembrane segment at 206 to 226 (VPFVEVSSLGVTTFSLCALGI) threads the bilayer. At 227–251 (DRFHVATSTLPKARPIEPCPSILAK) the chain is on the cytoplasmic side. Residues 252–272 (LAVIWVGSMTLAAPELLLWQL) form a helical membrane-spanning segment. The Extracellular portion of the chain corresponds to 273-310 (VREPSPAAGTVDTCIMKPSAHLPESLYSLVLTYQNARM). A helical membrane pass occupies residues 311 to 331 (WWSFGCYFCLPVLFTVTCQLV). Over 332–361 (TWRVRGTPGRKPESRPGPQEPRGARPSSTV) the chain is Cytoplasmic. The disordered stretch occupies residues 338 to 358 (TPGRKPESRPGPQEPRGARPS). A helical membrane pass occupies residues 362-382 (AGLAAVHALCALPENVCNVVA). Topologically, residues 383–398 (AYLSAALTRQTLELLG) are extracellular. A helical transmembrane segment spans residues 399-419 (LVTQFSTFFKAALTPLLLLCV). The Cytoplasmic portion of the chain corresponds to 420–482 (SRPLGRAFLD…PPLLALGTPC (63 aa)). T480 is modified (phosphothreonine).

Belongs to the G-protein coupled receptor 1 family. As to quaternary structure, interacts with the PTCH1 receptor. Post-translationally, undergoes metalloprotease-mediated cleavage which reduces its constitutive activity. In terms of processing, ubiquitinated.

The protein localises to the cell membrane. It localises to the cell projection. It is found in the cilium membrane. In terms of biological role, G-protein coupled receptor. Has been shown to bind the neuroprotective and glioprotective factor prosaposin (PSAP), leading to endocytosis followed by an ERK phosphorylation cascade. However, other studies have shown that prosaposin does not increase activity. It has been suggested that GPR37L1 is a constitutively active receptor which signals through the guanine nucleotide-binding protein G(s) subunit alpha. Participates in the regulation of postnatal cerebellar development by modulating the Shh pathway. Regulates baseline blood pressure in females and protects against cardiovascular stress in males. Mediates inhibition of astrocyte glutamate transporters and reduction in neuronal N-methyl-D-aspartate receptor activity. This chain is G-protein coupled receptor 37-like 1 (GPR37L1), found in Bos taurus (Bovine).